We begin with the raw amino-acid sequence, 508 residues long: Photosystem II CP47 reaction center protein (508 aa).

Helical transmembrane passes span 21-36 (SVHI…WAGS), 101-115 (IMFS…IWHW), 140-156 (GIHL…FGAF), 203-218 (IAAG…FHLS), 237-252 (VLSS…AFIV), and 457-472 (TFAL…HGAR).

The protein belongs to the PsbB/PsbC family. PsbB subfamily. PSII is composed of 1 copy each of membrane proteins PsbA, PsbB, PsbC, PsbD, PsbE, PsbF, PsbH, PsbI, PsbJ, PsbK, PsbL, PsbM, PsbT, PsbX, PsbY, PsbZ, Psb30/Ycf12, at least 3 peripheral proteins of the oxygen-evolving complex and a large number of cofactors. It forms dimeric complexes. Requires Binds multiple chlorophylls. PSII binds additional chlorophylls, carotenoids and specific lipids. as cofactor.

The protein localises to the plastid. The protein resides in the chloroplast thylakoid membrane. Functionally, one of the components of the core complex of photosystem II (PSII). It binds chlorophyll and helps catalyze the primary light-induced photochemical processes of PSII. PSII is a light-driven water:plastoquinone oxidoreductase, using light energy to abstract electrons from H(2)O, generating O(2) and a proton gradient subsequently used for ATP formation. The protein is Photosystem II CP47 reaction center protein of Pinus koraiensis (Korean pine).